The sequence spans 76 residues: Brevinin-2ISa (76 aa).

The signal sequence occupies residues 1–22 (MFNMKKSLLLLFFLGTISLSLC). Residues 23–41 (EEERDADEDDGVEMTEEEV) constitute a propeptide, removed in mature form. An intrachain disulfide couples Cys70 to Cys76.

Expressed by the skin glands.

It is found in the secreted. Has antimicrobial activity against Gram-negative bacterium E.coli ATCC 8739 (MIC=50 ug), against Gram positive bacteria S.aureus ATCC 6538 (MIC=12.5 ug), methicillin-resistant S.aureus ATCC 43300 (MIC=100 ug) and B.subtilis ATCC 6633 (MIC=12.5 ug). Has no activity against fungus C.albicans ATCC 90028. This is Brevinin-2ISa from Odorrana ishikawae (Ishikawa's frog).